The following is a 274-amino-acid chain: Large ribosomal subunit protein uL2 (274 aa).

Disordered stretches follow at residues 28–55 (APHA…RHVG) and 224–274 (VAMN…RRRK).

The protein belongs to the universal ribosomal protein uL2 family. Part of the 50S ribosomal subunit. Forms a bridge to the 30S subunit in the 70S ribosome.

In terms of biological role, one of the primary rRNA binding proteins. Required for association of the 30S and 50S subunits to form the 70S ribosome, for tRNA binding and peptide bond formation. It has been suggested to have peptidyltransferase activity; this is somewhat controversial. Makes several contacts with the 16S rRNA in the 70S ribosome. The polypeptide is Large ribosomal subunit protein uL2 (Pseudomonas putida (strain ATCC 47054 / DSM 6125 / CFBP 8728 / NCIMB 11950 / KT2440)).